A 195-amino-acid chain; its full sequence is Calcineurin B homologous protein 1 (195 aa).

Gly2 carries the N-myristoyl glycine lipid modification. The Necessary for association with microtubule and interaction with GAPDH signature appears at Gly2–Ser6. 4 EF-hand domains span residues Ser26–Pro61, Ile66–Asp101, Ser110–Val145, and Gln151–Glu186. Ca(2+)-binding residues include Asp123, Asp125, Asp127, Lys129, and Glu134. The Nuclear export signal 1 motif lies at Val138–Ile147. Residues Val143 to Val185 form a necessary for nuclear export signal region. Ca(2+) contacts are provided by Asp164, Asp166, Asp168, and Glu175. A Nuclear export signal 2 motif is present at residues Phe176–Val185.

It belongs to the calcineurin regulatory subunit family. CHP subfamily. As to quaternary structure, monomer. Interacts with STK17B; the interaction occurs in a calcium-independent manner and induces the translocation of CHP1 from the Golgi to the nucleus. Interacts with GAPDH; the interaction is direct, occurs in a N-myristoylation-dependent manner and facilitates the ability of CHP1 to bind microtubules. Interacts with KIF1B (via the C-terminal end of the kinesin-motor domain); the interaction occurs in a calcium-dependent manner. Associates (via C-terminal domain) with microtubules; the association occurs with polymerized microtubules during the cell cycle in a myristoylation- and calcium-independent manner and is enhanced by GAPDH. Interacts with PPP3CA. Interacts with SLC9A1/NHE1 (via the C-terminal domain); the interaction occurs at the plasma membrane in a calcium-dependent manner and at a domain that is critical for growth factor stimulation of the exchanger. Interacts with SLC9A3; increases SLC9A3 trafficking and activity at the plasma membrane. Phosphorylated; decreased phosphorylation is associated with an increase in SLC9A1/NHE1 Na(+)/H(+) exchange activity. Phosphorylation occurs in serum-dependent manner. The phosphorylation state may regulate the binding to SLC9A1/NHE1. Post-translationally, both N-myristoylation and calcium-mediated conformational changes are essential for its function in exocytic traffic. N-myristoylation is required for its association with microtubules and interaction with GAPDH, but not for the constitutive association to membranes. Ubiquitously expressed. Has been found in fetal eye, lung, liver, muscle, heart, kidney, thymus and spleen.

The protein localises to the nucleus. Its subcellular location is the cytoplasm. The protein resides in the cytoskeleton. It localises to the endomembrane system. It is found in the endoplasmic reticulum-Golgi intermediate compartment. The protein localises to the endoplasmic reticulum. Its subcellular location is the cell membrane. The protein resides in the membrane. Calcium-binding protein involved in different processes such as regulation of vesicular trafficking, plasma membrane Na(+)/H(+) exchanger and gene transcription. Involved in the constitutive exocytic membrane traffic. Mediates the association between microtubules and membrane-bound organelles of the endoplasmic reticulum and Golgi apparatus and is also required for the targeting and fusion of transcytotic vesicles (TCV) with the plasma membrane. Functions as an integral cofactor in cell pH regulation by controlling plasma membrane-type Na(+)/H(+) exchange activity. Affects the pH sensitivity of SLC9A1/NHE1 by increasing its sensitivity at acidic pH. Required for the stabilization and localization of SLC9A1/NHE1 at the plasma membrane. Inhibits serum- and GTPase-stimulated Na(+)/H(+) exchange. Plays a role as an inhibitor of ribosomal RNA transcription by repressing the nucleolar UBF1 transcriptional activity. May sequester UBF1 in the nucleoplasm and limit its translocation to the nucleolus. Associates to the ribosomal gene promoter. Acts as a negative regulator of the calcineurin/NFAT signaling pathway. Inhibits NFAT nuclear translocation and transcriptional activity by suppressing the calcium-dependent calcineurin phosphatase activity. Also negatively regulates the kinase activity of the apoptosis-induced kinase STK17B. Inhibits both STK17B auto- and substrate-phosphorylations in a calcium-dependent manner. This Homo sapiens (Human) protein is Calcineurin B homologous protein 1 (CHP1).